A 223-amino-acid chain; its full sequence is UPF0441 protein YgiB (223 aa).

Positions 178 to 195 (TVPKTAMAPKPATTTTVT) are enriched in low complexity. Residues 178 to 223 (TVPKTAMAPKPATTTTVTRGGFGESVAKQSTMQRGATGTSSRSMGG) are disordered. A compositionally biased stretch (polar residues) spans 204-223 (AKQSTMQRGATGTSSRSMGG).

Belongs to the UPF0441 family.

This chain is UPF0441 protein YgiB, found in Escherichia coli O6:K15:H31 (strain 536 / UPEC).